Here is an 806-residue protein sequence, read N- to C-terminus: Mitogen-activated protein kinase 7 (806 aa).

The segment at 1-23 (MAEPLKEEDGEDGSGEPPGRVKA) is disordered. Ala2 carries the N-acetylalanine modification. Residues 2–77 (AEPLKEEDGE…VVSSARRRLT (76 aa)) are required for cytoplasmic targeting. In terms of domain architecture, Protein kinase spans 55–347 (YEIIETIGNG…AAAALRHPFL (293 aa)). ATP contacts are provided by residues 61 to 69 (IGNGAYGVV) and Lys84. The tract at residues 78–139 (GQQVAIKKIP…FRSVYVVLDL (62 aa)) is required for binding to MAP2K5. Residues 140–406 (MESDLHQIIH…QQIRFQPSLQ (267 aa)) are necessary for oligomerization. Asp182 serves as the catalytic Proton acceptor. The TXY signature appears at 219–221 (TEY). Residues 407 to 806 (PVASEPVCPD…LSDLPDLQEP (400 aa)) form a may not be required for kinase activity; required to stimulate MEF2C activity region. Disordered regions lie at residues 424–475 (APSG…SDNT) and 488–727 (RSRL…PKGS). A compositionally biased stretch (pro residues) spans 433-443 (SPPPALPPCSG). Basic and acidic residues-rich tracts occupy residues 502-519 (PEPR…EREE), 527-544 (RAKE…KERG), and 563-573 (DNDRSLLERWT). The Nuclear localization signal signature appears at 505–539 (RKPVTAQERQREREEKRRRRQERAKEREKRRQERE). 2 stretches are compositionally biased toward pro residues: residues 578–592 (PPVP…PTPK) and 627–643 (VCPP…PVPA). A compositionally biased stretch (polar residues) spans 647–660 (TAPSTSLLASQSLV). Residues 678–689 (PSGPPPPDPGLT) show a composition bias toward pro residues. Positions 693–710 (STSESPDVNLVTQQLSKS) are enriched in polar residues. Position 710 is a phosphoserine (Ser710). Phosphothreonine is present on Thr723.

Belongs to the protein kinase superfamily. CMGC Ser/Thr protein kinase family. MAP kinase subfamily. As to quaternary structure, interacts with MAP2K5. Forms oligomers. Interacts with MEF2A, MEF2C and MEF2D; the interaction phosphorylates the MEF2s and enhances transcriptional activity of MEF2A, MEF2C but not MEF2D. Interacts with SGK1. Interacts with PML. Interacts (via N-terminal half) with HSP90AB1-CDC37 chaperone complex in resting cells; the interaction is MAP2K5-independent and prevents MAPK7 from ubiquitination and proteasomal degradation. Interacts with STUB1/CHIP; the interaction is enhanced in the presence of IGF1 or MAP2K5 and promotes STUB1/CHIP E3 ligase activity. It depends on Mg(2+) as a cofactor. In terms of processing, dually phosphorylated on Thr-219 and Tyr-221, which activates the enzyme.

It is found in the cytoplasm. The protein localises to the nucleus. It localises to the PML body. It catalyses the reaction L-seryl-[protein] + ATP = O-phospho-L-seryl-[protein] + ADP + H(+). The enzyme catalyses L-threonyl-[protein] + ATP = O-phospho-L-threonyl-[protein] + ADP + H(+). Its activity is regulated as follows. Activated by tyrosine and threonine phosphorylation. Activated in response to hyperosmolarity, hydrogen peroxide, and epidermal growth factor (EGF). Plays a role in various cellular processes such as proliferation, differentiation and cell survival. The upstream activator of MAPK7 is the MAPK kinase MAP2K5. Upon activation, it translocates to the nucleus and phosphorylates various downstream targets including MEF2C. EGF activates MAPK7 through a Ras-independent and MAP2K5-dependent pathway. As part of the MAPK/ERK signaling pathway, acts as a negative regulator of apoptosis in cardiomyocytes via interaction with STUB1/CHIP and promotion of STUB1-mediated ubiquitination and degradation of ICER-type isoforms of CREM. May have a role in muscle cell differentiation. May be important for endothelial function and maintenance of blood vessel integrity. MAP2K5 and MAPK7 interact specifically with one another and not with MEK1/ERK1 or MEK2/ERK2 pathways. Phosphorylates SGK1 at Ser-78 and this is required for growth factor-induced cell cycle progression. Involved in the regulation of p53/TP53 by disrupting the PML-MDM2 interaction. The protein is Mitogen-activated protein kinase 7 (Mapk7) of Rattus norvegicus (Rat).